A 159-amino-acid polypeptide reads, in one-letter code: Secreted RxLR effector protein 50 (159 aa).

Residues M1–G19 form the signal peptide. The RxLR-dEER signature appears at R38–R54.

Belongs to the RxLR effector family.

The protein localises to the secreted. Its subcellular location is the host nucleus. It localises to the host cytoplasm. Functionally, secreted effector that completely suppresses the host cell death induced by cell death-inducing proteins. This chain is Secreted RxLR effector protein 50, found in Plasmopara viticola (Downy mildew of grapevine).